Consider the following 228-residue polypeptide: Ribosomal RNA small subunit methyltransferase G (228 aa).

S-adenosyl-L-methionine is bound by residues G82, L87, 105 to 107 (DAT), 133 to 134 (VE), and R147.

The protein belongs to the methyltransferase superfamily. RNA methyltransferase RsmG family.

It is found in the cytoplasm. In terms of biological role, specifically methylates the N7 position of a guanine in 16S rRNA. This chain is Ribosomal RNA small subunit methyltransferase G, found in Pelodictyon phaeoclathratiforme (strain DSM 5477 / BU-1).